A 479-amino-acid chain; its full sequence is Zinc metalloproteinase/disintegrin PMMP-1 (479 aa).

A signal peptide spans Met1–Ser20. The propeptide occupies Ile21–Val188. The 197-residue stretch at Arg194–Pro390 folds into the Peptidase M12B domain. Cystine bridges form between Cys305-Cys385, Cys345-Cys369, and Cys347-Cys352. Residue His330 participates in Zn(2+) binding. Glu331 is a catalytic residue. Residues His334 and His339 each coordinate Zn(2+). N-linked (GlcNAc...) asparagine glycosylation is present at Asn368. Residues Leu391–Ala408 constitute a propeptide that is removed on maturation. Residues Thr398–Gly479 form the Disintegrin domain. Intrachain disulfides connect Cys412–Cys427, Cys414–Cys422, Cys421–Cys444, Cys435–Cys441, Cys440–Cys465, and Cys453–Cys472. Positions Arg457 to Asp459 match the Cell attachment site motif.

The protein belongs to the venom metalloproteinase (M12B) family. P-II subfamily. P-IIa sub-subfamily. In terms of assembly, monomer. The cofactor is Zn(2+). As to expression, expressed by the venom gland.

The protein resides in the secreted. In terms of biological role, impairs hemostasis in the envenomed animal. Its function is as follows. Inhibits platelet aggregation. The chain is Zinc metalloproteinase/disintegrin PMMP-1 from Protobothrops mucrosquamatus (Taiwan habu).